The primary structure comprises 620 residues: Threonine--tRNA ligase (620 aa).

A TGS domain is found at 1-42; sequence MFEIAKGISNSLAKKSVGAKVDGKNVDMSYILDHDAEVEFID. Residues 224 to 515 form a catalytic region; that stretch reads DHRKLGKELE…LIEHYAGAFP (292 aa). 3 residues coordinate Zn(2+): Cys315, His366, and His492.

Belongs to the class-II aminoacyl-tRNA synthetase family. In terms of assembly, homodimer. Zn(2+) serves as cofactor.

The protein localises to the cytoplasm. It catalyses the reaction tRNA(Thr) + L-threonine + ATP = L-threonyl-tRNA(Thr) + AMP + diphosphate + H(+). In terms of biological role, catalyzes the attachment of threonine to tRNA(Thr) in a two-step reaction: L-threonine is first activated by ATP to form Thr-AMP and then transferred to the acceptor end of tRNA(Thr). Also edits incorrectly charged L-seryl-tRNA(Thr). This chain is Threonine--tRNA ligase, found in Fusobacterium nucleatum subsp. nucleatum (strain ATCC 25586 / DSM 15643 / BCRC 10681 / CIP 101130 / JCM 8532 / KCTC 2640 / LMG 13131 / VPI 4355).